The chain runs to 172 residues: Adenine phosphoribosyltransferase (172 aa).

This sequence belongs to the purine/pyrimidine phosphoribosyltransferase family. Homodimer.

The protein localises to the cytoplasm. The catalysed reaction is AMP + diphosphate = 5-phospho-alpha-D-ribose 1-diphosphate + adenine. It participates in purine metabolism; AMP biosynthesis via salvage pathway; AMP from adenine: step 1/1. Its function is as follows. Catalyzes a salvage reaction resulting in the formation of AMP, that is energically less costly than de novo synthesis. The sequence is that of Adenine phosphoribosyltransferase from Methanococcus maripaludis (strain C5 / ATCC BAA-1333).